The sequence spans 407 residues: MASYKDVKKVVLAYSGGLDTSIILKWLQTELGAEVVTFTADLGQGEELEPARKKAEMLGIKEIYIEDVREEFVRDFVFPMFRANAVYEGVYLLGTSIARPLISKHLIDIARKTGADAIAHGATGKGNDQVRFELSAYALNPDIKIIAPWRDWAFKSRTELLAFAEQHQIPVAKDKKGEAPFSVDANLLHSSSEGKVLEDPAQEAPEYVHMRTISPEAAPDKATVIKVGFRKGDAVSINGVEMSPATLLATLNTYGRDNGIGRLDLVENRFVGMKSRGVYETPGGTILLSAHRAIESITLDRGAAHLKDEIMPRYAELIYYGFWFSPEREMLQALIDKSQEYVEGEVTLKLYKGNVMVIGRESEKSLYSDKLVTFEDDQGAYDQKDAAGFIKLNALRLRTLGKRNLAK.

Residues 13 to 21 (AYSGGLDTS) and Ala40 each bind ATP. Residues Tyr91 and Ser96 each contribute to the L-citrulline site. Gly121 is an ATP binding site. Positions 123, 127, and 128 each coordinate L-aspartate. Position 127 (Asn127) interacts with L-citrulline. The L-citrulline site is built by Arg131, Ser182, Ser191, Glu267, and Tyr279.

This sequence belongs to the argininosuccinate synthase family. Type 1 subfamily. Homotetramer.

The protein resides in the cytoplasm. It carries out the reaction L-citrulline + L-aspartate + ATP = 2-(N(omega)-L-arginino)succinate + AMP + diphosphate + H(+). It participates in amino-acid biosynthesis; L-arginine biosynthesis; L-arginine from L-ornithine and carbamoyl phosphate: step 2/3. This chain is Argininosuccinate synthase, found in Rhizobium etli (strain ATCC 51251 / DSM 11541 / JCM 21823 / NBRC 15573 / CFN 42).